Consider the following 96-residue polypeptide: Small ribosomal subunit protein bS6 (96 aa).

It belongs to the bacterial ribosomal protein bS6 family.

Binds together with bS18 to 16S ribosomal RNA. The sequence is that of Small ribosomal subunit protein bS6 (rpsF) from Streptomyces coelicolor (strain ATCC BAA-471 / A3(2) / M145).